The sequence spans 432 residues: Gamma-glutamyl phosphate reductase (432 aa).

It belongs to the gamma-glutamyl phosphate reductase family.

Its subcellular location is the cytoplasm. The catalysed reaction is L-glutamate 5-semialdehyde + phosphate + NADP(+) = L-glutamyl 5-phosphate + NADPH + H(+). Its pathway is amino-acid biosynthesis; L-proline biosynthesis; L-glutamate 5-semialdehyde from L-glutamate: step 2/2. In terms of biological role, catalyzes the NADPH-dependent reduction of L-glutamate 5-phosphate into L-glutamate 5-semialdehyde and phosphate. The product spontaneously undergoes cyclization to form 1-pyrroline-5-carboxylate. This chain is Gamma-glutamyl phosphate reductase, found in Brachyspira hyodysenteriae (strain ATCC 49526 / WA1).